We begin with the raw amino-acid sequence, 213 residues long: Pyrrolidone-carboxylate peptidase (213 aa).

Catalysis depends on residues Glu78, Cys141, and His165.

Belongs to the peptidase C15 family. As to quaternary structure, homotetramer.

The protein resides in the cytoplasm. The catalysed reaction is Release of an N-terminal pyroglutamyl group from a polypeptide, the second amino acid generally not being Pro.. Functionally, removes 5-oxoproline from various penultimate amino acid residues except L-proline. The sequence is that of Pyrrolidone-carboxylate peptidase from Finegoldia magna (strain ATCC 29328 / DSM 20472 / WAL 2508) (Peptostreptococcus magnus).